A 212-amino-acid polypeptide reads, in one-letter code: Suppressor of cytokine signaling 1 (212 aa).

Residues 1–55 (MVARNQVAADNAISPAAEPRRRSEPSSSSSSSSPAAPVRPRPCPAVPAPAPGDTH) form a disordered region. Over residues 25 to 36 (PSSSSSSSSPAA) the composition is skewed to low complexity. Pro residues predominate over residues 37-50 (PVRPRPCPAVPAPA). The kinase inhibitory region (KIR) stretch occupies residues 56–67 (FRTFRSHSDYRR). The segment at 68–79 (ITRTSALLDACG) is extended SH2 subdomain (ESS). Positions 80–175 (FYWGPLSVHG…PLRQRRVRPL (96 aa)) constitute an SH2 domain. Positions 162–211 (MLGAPLRQRRVRPLQELCRQRIVAAVGRENLARIPLNPVLRDYLSSFPFQ) constitute an SOCS box domain. The interval 174-183 (PLQELCRQRI) is interaction with Elongin BC complex.

Belongs to the SOCS1 family. Interacts with multiple activated proteins of the tyrosine kinase signaling pathway including JAK family kinases, TEC, KIT, GRB2 and VAV. Binding to JAKs is mediated through the KIR and SH2 domain to a phosphorylated tyrosine residue within the JAK JH1 domain. Binds the SH3 domain of GRB2 via diproline determinants in the N-terminus, and the N-terminal regulatory domain of VAV. Interacts with the Elongin BC complex (ELOB and ELOC). Component of an ECS CBC(SOCS1) E3 ubiquitin-protein ligase complex which contains Elongin BC, CUL5, RBX1 and SOCS1. Interacts (via SH2 domain and SOCS box) with TRIM8. Interacts with CUL2. Interacts with AXL and FGFR3. Interacts with INSR. Interacts with TRIM8. Interacts with DCUN1D1. Interacts with IFNGR1. High expression in thymus. Lower expression in lung and spleen. Expressed in both Th1 and Th2 cells.

The protein localises to the nucleus. The protein resides in the cytoplasmic vesicle. It functions in the pathway protein modification; protein ubiquitination. In terms of biological role, essential negative regulator of type I and type II interferon (IFN) signaling, as well as that of other cytokines, including IL2, IL4, IL6 and leukemia inhibitory factor (LIF). Downregulates cytokine signaling by inhibiting the JAK/STAT signaling pathway. Acts by binding to JAK proteins and to IFNGR1 and inhibiting their kinase activity. In vitro, suppresses Tec protein-tyrosine activity. Regulates IFN-gamma (IFNG)-mediated sensory neuron survival. Probable substrate recognition component of an ECS (Elongin BC-CUL2/5-SOCS-box protein) E3 ubiquitin ligase complex which mediates the ubiquitination and subsequent proteasomal degradation of target proteins. The polypeptide is Suppressor of cytokine signaling 1 (Mus musculus (Mouse)).